Here is a 58-residue protein sequence, read N- to C-terminus: Isocitrate lyase (58 aa).

Belongs to the isocitrate lyase/PEP mutase superfamily. Isocitrate lyase family. Homotetramer. Mg(2+) serves as cofactor.

The protein localises to the glyoxysome. The catalysed reaction is D-threo-isocitrate = glyoxylate + succinate. It functions in the pathway carbohydrate metabolism; glyoxylate cycle; (S)-malate from isocitrate: step 1/2. Functionally, involved in storage lipid mobilization during the growth of higher plant seedling. The sequence is that of Isocitrate lyase from Helianthus annuus (Common sunflower).